Here is a 508-residue protein sequence, read N- to C-terminus: MLO-like protein 3 (508 aa).

Residues 1–21 lie on the Extracellular side of the membrane; the sequence is MTDKEESNHSSEVGAVRSLQE. The chain crosses the membrane as a helical span at residues 22-42; the sequence is TPTWALATVCFFFIAVSICLE. At 43–68 the chain is on the cytoplasmic side; sequence RLINLLSTRLKKNRKTSLLEAVEKLK. The helical transmembrane segment at 69-89 threads the bilayer; it reads SVLMVLGFMSLMLNVTEGEVS. The Extracellular segment spans residues 90–153; sequence KICIPIKYAN…SEEGLTQLSY (64 aa). The helical transmembrane segment at 154–174 threads the bilayer; sequence FFFVLACMHILCNLAILLLGM. At 175-275 the chain is on the cytoplasmic side; the sequence is AKMRKWNSWE…IQRSLHEDFK (101 aa). The chain crosses the membrane as a helical span at residues 276 to 296; the sequence is TVVGISPLMWLTVVIFMLLDV. The Extracellular segment spans residues 297–304; the sequence is SGWRVYFY. A helical membrane pass occupies residues 305–325; sequence MSFVPLIIVLVIGTKLEMIVA. At 326–357 the chain is on the cytoplasmic side; it reads KMAVTIKENNSVIRGTPLVESNDTHFWFSNPR. Residues 358–378 traverse the membrane as a helical segment; that stretch reads FLLSILHYTLFLNTFEMAFIV. Over 379–401 the chain is Extracellular; that stretch reads WITWQFGINSCYHDNQGIIITRL. A helical transmembrane segment spans residues 402–422; it reads VLAVTVQFLSSYITLPLYAIV. Residues 423–508 lie on the Cytoplasmic side of the membrane; it reads TQMGSSYKRA…EIQIQEKTER (86 aa). Residues 436–457 form a calmodulin-binding region; sequence EQLANVLRHWQGMVRDKKKTIQ. The interval 453–492 is disordered; that stretch reads KKTIQTPDTDNNSNNNNGDIDSGESPVQTEVASEFRFSGR. Ser494 is subject to Phosphoserine.

It belongs to the MLO family.

The protein resides in the membrane. Functionally, may be involved in modulation of pathogen defense and leaf cell death. Activity seems to be regulated by Ca(2+)-dependent calmodulin binding and seems not to require heterotrimeric G proteins. The protein is MLO-like protein 3 (MLO3) of Arabidopsis thaliana (Mouse-ear cress).